The chain runs to 325 residues: Phospho-N-acetylmuramoyl-pentapeptide-transferase (325 aa).

10 helical membrane-spanning segments follow: residues 9 to 29, 53 to 73, 77 to 97, 112 to 132, 154 to 174, 182 to 202, 204 to 224, 231 to 251, 257 to 277, and 305 to 325; these read ALLV…PWLL, TMGG…FQAF, TLLL…DDYL, KLLG…AFLG, LGNV…ANAV, GLCS…SLAL, EKGL…FLVY, VFMG…FAVL, FLLL…IQVI, and KIVL…GYGL.

The protein belongs to the glycosyltransferase 4 family. MraY subfamily. It depends on Mg(2+) as a cofactor.

The protein resides in the cell membrane. It carries out the reaction UDP-N-acetyl-alpha-D-muramoyl-L-alanyl-gamma-D-glutamyl-meso-2,6-diaminopimeloyl-D-alanyl-D-alanine + di-trans,octa-cis-undecaprenyl phosphate = di-trans,octa-cis-undecaprenyl diphospho-N-acetyl-alpha-D-muramoyl-L-alanyl-D-glutamyl-meso-2,6-diaminopimeloyl-D-alanyl-D-alanine + UMP. It functions in the pathway cell wall biogenesis; peptidoglycan biosynthesis. In terms of biological role, catalyzes the initial step of the lipid cycle reactions in the biosynthesis of the cell wall peptidoglycan: transfers peptidoglycan precursor phospho-MurNAc-pentapeptide from UDP-MurNAc-pentapeptide onto the lipid carrier undecaprenyl phosphate, yielding undecaprenyl-pyrophosphoryl-MurNAc-pentapeptide, known as lipid I. This is Phospho-N-acetylmuramoyl-pentapeptide-transferase from Carboxydothermus hydrogenoformans (strain ATCC BAA-161 / DSM 6008 / Z-2901).